The primary structure comprises 226 residues: Uracil-DNA glycosylase (226 aa).

The Proton acceptor role is filled by Asp65.

It belongs to the uracil-DNA glycosylase (UDG) superfamily. UNG family.

It is found in the cytoplasm. The enzyme catalyses Hydrolyzes single-stranded DNA or mismatched double-stranded DNA and polynucleotides, releasing free uracil.. In terms of biological role, excises uracil residues from the DNA which can arise as a result of misincorporation of dUMP residues by DNA polymerase or due to deamination of cytosine. The polypeptide is Uracil-DNA glycosylase (Enterococcus faecalis (strain ATCC 700802 / V583)).